The chain runs to 888 residues: Bifunctional uridylyltransferase/uridylyl-removing enzyme (888 aa).

Residues 1–348 (MATTTDKQVS…YHFAEDKIEP (348 aa)) form a uridylyltransferase region. Residues 349-709 (INPRFRIINN…LQPTTSRGAT (361 aa)) are uridylyl-removing. The region spanning 468–590 (VDEHTILVIR…VGTQQRLDYL (123 aa)) is the HD domain. ACT domains lie at 710 to 787 (ELII…DDTM) and 817 to 888 (ELSI…NIEQ).

Belongs to the GlnD family. The cofactor is Mg(2+).

It catalyses the reaction [protein-PII]-L-tyrosine + UTP = [protein-PII]-uridylyl-L-tyrosine + diphosphate. It carries out the reaction [protein-PII]-uridylyl-L-tyrosine + H2O = [protein-PII]-L-tyrosine + UMP + H(+). Uridylyltransferase (UTase) activity is inhibited by glutamine, while glutamine activates uridylyl-removing (UR) activity. Functionally, modifies, by uridylylation and deuridylylation, the PII regulatory proteins (GlnB and homologs), in response to the nitrogen status of the cell that GlnD senses through the glutamine level. Under low glutamine levels, catalyzes the conversion of the PII proteins and UTP to PII-UMP and PPi, while under higher glutamine levels, GlnD hydrolyzes PII-UMP to PII and UMP (deuridylylation). Thus, controls uridylylation state and activity of the PII proteins, and plays an important role in the regulation of nitrogen assimilation and metabolism. The sequence is that of Bifunctional uridylyltransferase/uridylyl-removing enzyme from Hydrogenovibrio crunogenus (strain DSM 25203 / XCL-2) (Thiomicrospira crunogena).